The sequence spans 361 residues: Cysteine-rich with EGF-like domain protein 2-B (361 aa).

Positions 1–24 (MNGSRAWRLAAWLLLCLSCSAAVA) are cleaved as a signal peptide. The region spanning 134-176 (DCLACLGGSERPCHGNGFCSGDGTRSGDGSCRCKAEYTGSFCL) is the EGF-like 1 domain. 3 cysteine pairs are disulfide-bonded: cysteine 138–cysteine 152, cysteine 146–cysteine 164, and cysteine 166–cysteine 175. Asparagine 188 carries N-linked (GlcNAc...) asparagine glycosylation. 2 FU repeats span residues 191–238 (HAVC…EESP) and 251–298 (SFLC…SEKL). Positions 288 to 329 (DVDECDASEKLCLRENEVCLNTAGSYKCTCSEGFEDKEGNCV) constitute an EGF-like 2; calcium-binding domain. Intrachain disulfides connect cysteine 292–cysteine 306, cysteine 299–cysteine 315, and cysteine 317–cysteine 328. A disordered region spans residues 339 to 361 (ITEGETGTPASDTNILNTAHEDL). Positions 346-355 (TPASDTNILN) are enriched in polar residues.

Belongs to the CRELD family.

The protein localises to the secreted. It is found in the endoplasmic reticulum. Functionally, possible role in neuronal acetylcholine receptor transport. This is Cysteine-rich with EGF-like domain protein 2-B (creld2-b) from Xenopus laevis (African clawed frog).